The sequence spans 270 residues: Regulatory protein RecX (270 aa).

It belongs to the RecX family.

It is found in the cytoplasm. Modulates RecA activity. This Bacillus thuringiensis subsp. konkukian (strain 97-27) protein is Regulatory protein RecX.